Reading from the N-terminus, the 398-residue chain is 4-hydroxy-3-methylbut-2-en-1-yl diphosphate synthase (ferredoxin) (398 aa).

[4Fe-4S] cluster-binding residues include Cys-306, Cys-309, Cys-340, and Glu-347.

It belongs to the IspG family. It depends on [4Fe-4S] cluster as a cofactor.

It carries out the reaction (2E)-4-hydroxy-3-methylbut-2-enyl diphosphate + 2 oxidized [2Fe-2S]-[ferredoxin] + H2O = 2-C-methyl-D-erythritol 2,4-cyclic diphosphate + 2 reduced [2Fe-2S]-[ferredoxin] + H(+). The protein operates within isoprenoid biosynthesis; isopentenyl diphosphate biosynthesis via DXP pathway; isopentenyl diphosphate from 1-deoxy-D-xylulose 5-phosphate: step 5/6. Converts 2C-methyl-D-erythritol 2,4-cyclodiphosphate (ME-2,4cPP) into 1-hydroxy-2-methyl-2-(E)-butenyl 4-diphosphate. The protein is 4-hydroxy-3-methylbut-2-en-1-yl diphosphate synthase (ferredoxin) of Synechococcus sp. (strain CC9311).